The following is a 267-amino-acid chain: Undecaprenyl-diphosphatase (267 aa).

Transmembrane regions (helical) follow at residues 4-24, 41-61, 69-89, 96-116, 173-193, 207-227, and 239-259; these read LYAL…ISST, FWKS…IFVF, LDIW…GLFV, LFNG…FILI, AAEF…AYSI, IPLG…IKFF, and FGIY…SGIL.

This sequence belongs to the UppP family.

The protein resides in the cell inner membrane. The catalysed reaction is di-trans,octa-cis-undecaprenyl diphosphate + H2O = di-trans,octa-cis-undecaprenyl phosphate + phosphate + H(+). Functionally, catalyzes the dephosphorylation of undecaprenyl diphosphate (UPP). Confers resistance to bacitracin. This chain is Undecaprenyl-diphosphatase, found in Campylobacter jejuni subsp. jejuni serotype O:2 (strain ATCC 700819 / NCTC 11168).